We begin with the raw amino-acid sequence, 126 residues long: Topoisomerase I damage affected protein 2 (126 aa).

N-acetylserine is present on Ser-2.

Belongs to the TDA2 family.

Its subcellular location is the cytoplasm. The protein localises to the cell projection. The chain is Topoisomerase I damage affected protein 2 (TDA2) from Saccharomyces cerevisiae (strain JAY291) (Baker's yeast).